The sequence spans 1703 residues: Homeobox protein prospero (1703 aa).

Disordered regions lie at residues 23–292, 322–357, 437–521, 608–692, 732–751, 823–844, 875–951, 1040–1101, 1197–1217, 1245–1389, and 1418–1469; these read LKAN…SNGG, SVST…SGAS, NSIA…QSQL, EPQT…ESVD, EDDD…CLKK, QEDS…VEKN, SECQ…DSGA, FEQE…RMGG, SPRT…TQSA, PFCL…VSLP, and AGQA…PSML. Low complexity predominate over residues 36-53; it reads QQHQPQFQQQQQQQQQQQ. Residues 66–79 show a composition bias toward polar residues; that stretch reads SNGHTSPIPSQVNG. The span at 92 to 109 shows a compositional bias: low complexity; sequence TNTNTGSHSHSNSGNTNT. The segment covering 110 to 126 has biased composition (basic and acidic residues); it reads DADKEQEREKAKEKANE. Residues 127 to 136 are compositionally biased toward acidic residues; it reads EESEDSDDDV. Composition is skewed to low complexity over residues 137–188, 196–255, 274–292, 327–337, and 346–357; these read VVVL…GGSS, SSRQ…ANSK, ASSN…SNGG, NSSSSNNNNSS, and SPTSNSPVSGAS. Residues 437-452 are compositionally biased toward polar residues; that stretch reads NSIAPANSTPMSNGTN. Over residues 453 to 472 the composition is skewed to low complexity; sequence ASISPGSAHSSSHSHQGVSP. Residues serine 479, serine 482, serine 485, and serine 497 each carry the phosphoserine modification. 2 stretches are compositionally biased toward polar residues: residues 503–521 and 608–617; these read SVSS…QSQL and EPQTAPQPQQ. A compositionally biased stretch (low complexity) spans 618-642; it reads SPHGSSHSSRSGSGSGSHSSMASDG. Basic and acidic residues-rich tracts occupy residues 643–658 and 674–691; these read SLRR…HGAQ and SESR…KESV. Residues serine 651 and serine 654 each carry the phosphoserine modification. Residues 875–892 show a composition bias toward acidic residues; it reads SECQELDQDQDVEQEQEP. Positions 927-944 are enriched in low complexity; sequence PGSSSPSPSPLKPKTSLG. The segment covering 1040-1054 has biased composition (basic and acidic residues); it reads FEQEQQEQQRRKEEQ. Residues 1055 to 1076 show a composition bias toward low complexity; the sequence is QQQIQRQQQHLQQLQQQQMEQQ. A compositionally biased stretch (polar residues) spans 1208–1217; that stretch reads NGPTPATQSA. Over residues 1252–1278 the composition is skewed to low complexity; sequence QQQQQQTAQQQQSAQQQQQSSQQTQQQ. The Nuclear localization signal signature appears at 1291 to 1298; sequence PKKKRHKV. Over residues 1328–1348 the composition is skewed to low complexity; that stretch reads PQQQQQQQQQQQQQQQQQQQQ. Residues 1349–1367 are compositionally biased toward polar residues; it reads ASNGGNSNATPAQSPTRSS. Over residues 1374–1384 the composition is skewed to pro residues; that stretch reads PQPPPPPPPMM. A compositionally biased stretch (basic residues) spans 1427-1437; the sequence is HQHHQQHHPHH. The span at 1438 to 1451 shows a compositional bias: low complexity; sequence QSMQLSSSPPGSLG. A Prospero-type homeo domain is found at 1545-1603; the sequence is SSTLTPMHLRKAKLMFFWVRYPSSAVLKMYFPDIKFNKNNTAQLVKWFSNFREFYYIQM. Residues 1545 to 1703 are homeo-Prospero; sequence SSTLTPMHLR…KSPNFLEQLE (159 aa). In terms of domain architecture, Prospero spans 1604 to 1703; sequence EKYARQAVTE…KSPNFLEQLE (100 aa).

This sequence belongs to the Prospero homeodomain family.

It is found in the nucleus. It localises to the cytoplasm. The protein resides in the cell cortex. Homeodomain protein that controls neuronal identity. As a transcriptional factor, regulates the expression of ftz, eve and en in a subset of neuroblast progeny and modulates the transcriptional activity of other homeodomain proteins such as Dfd. Required for proper neuronal differentiation, axonal outgrowth and pathfinding of most or all neurons and their precursors in central and peripheral nervous systems. Regulates asymmetric stem cell self-renewal together with brat. In Drosophila melanogaster (Fruit fly), this protein is Homeobox protein prospero (pros).